Here is a 94-residue protein sequence, read N- to C-terminus: Large ribosomal subunit protein bL27 (94 aa).

The propeptide occupies 1–9; it reads MLRLDLQFF.

This sequence belongs to the bacterial ribosomal protein bL27 family. Part of the 50S ribosomal subunit. In terms of processing, the N-terminus is cleaved by ribosomal processing cysteine protease Prp.

Functionally, plays a role in sporulation at high temperatures. The sequence is that of Large ribosomal subunit protein bL27 (rpmA) from Bacillus subtilis (strain 168).